We begin with the raw amino-acid sequence, 337 residues long: Cytoskeleton protein RodZ (337 aa).

Topologically, residues 1 to 111 (MNTEATHDQN…LGKRRKKRDG (111 aa)) are cytoplasmic. Residues 19–71 (LRNAREQLGLSQQAVAERLCLKVSTVRDIEEDKAPADLASTFLRGYIRSYARL) enclose the HTH cro/C1-type domain. Positions 30–49 (QQAVAERLCLKVSTVRDIEE) form a DNA-binding region, H-T-H motif. The chain crosses the membrane as a helical; Signal-anchor for type II membrane protein span at residues 112–132 (WLMTFTWLVLFVVIGLSGAWW). The Periplasmic segment spans residues 133-337 (WQDRKAQQEE…TLNAEQSPAQ (205 aa)). Polar residues predominate over residues 144-167 (TTMADQSSAELSSNSEQGQSVPLN). A disordered region spans residues 144–235 (TTMADQSSAE…PTAATTPDGA (92 aa)). Residues 168-207 (TSTTTDPATTSTPPASVDTTATNTQTPAVTAPAPAVDPQQ) show a composition bias toward low complexity. Residues 208–218 (NAVVSPSQANV) show a composition bias toward polar residues. Positions 219–235 (DTAATPAPTAATTPDGA) are enriched in low complexity.

Belongs to the RodZ family.

The protein localises to the cell inner membrane. Cytoskeletal protein that is involved in cell-shape control through regulation of the length of the long axis. In Escherichia coli (strain K12 / MC4100 / BW2952), this protein is Cytoskeleton protein RodZ.